We begin with the raw amino-acid sequence, 255 residues long: uncharacterized protein (255 aa).

The region spanning 4 to 72 (DPYSVLGVEK…KRRKHYDKTG (69 aa)) is the J domain. 2 stretches are compositionally biased toward basic residues: residues 167-178 (FAPNEKKRKRRA) and 243-255 (TKPK…RSKE). 2 disordered regions span residues 167-215 (FAPN…EEAL) and 230-255 (LISN…RSKE).

This sequence belongs to the DnaJ family.

The protein resides in the nucleus. It is found in the nucleolus. This is an uncharacterized protein from Schizosaccharomyces pombe (strain 972 / ATCC 24843) (Fission yeast).